Reading from the N-terminus, the 332-residue chain is Heat-inducible transcription repressor HrcA (332 aa).

It belongs to the HrcA family.

Its function is as follows. Negative regulator of class I heat shock genes (grpE-dnaK-dnaJ and groELS operons). Prevents heat-shock induction of these operons. The polypeptide is Heat-inducible transcription repressor HrcA (Mycoplasma mobile (strain ATCC 43663 / 163K / NCTC 11711) (Mesomycoplasma mobile)).